We begin with the raw amino-acid sequence, 509 residues long: Heat shock 70 kDa protein 14 (509 aa).

It belongs to the heat shock protein 70 family. In terms of assembly, component of ribosome-associated complex (RAC), a heterodimer composed of Hsp70/DnaK-type chaperone HSPA14 and Hsp40/DnaJ-type chaperone DNAJC2.

It localises to the cytoplasm. Its subcellular location is the cytosol. Component of the ribosome-associated complex (RAC), a complex involved in folding or maintaining nascent polypeptides in a folding-competent state. In the RAC complex, binds to the nascent polypeptide chain, while DNAJC2 stimulates its ATPase activity. The protein is Heat shock 70 kDa protein 14 (HSPA14) of Pongo abelii (Sumatran orangutan).